Consider the following 431-residue polypeptide: Serine/threonine-protein kinase PknA (431 aa).

Topologically, residues 1-339 (MSPRVGVTLS…RRTFSSGQRA (339 aa)) are cytoplasmic. A Protein kinase domain is found at 13–272 (YRLQRLIATG…SGGPFADAVA (260 aa)). ATP contacts are provided by residues 19 to 27 (IATGGMGQV) and Lys42. The Proton acceptor role is filled by Asp141. Positions 276 to 333 (AGRRPPRPSQTPPPGRAAPAAIPSGTTARVAANSAGRTAASRRSRPATGGHRPPRRTF) are disordered. Residues 282 to 291 (RPSQTPPPGR) show a composition bias toward pro residues. Over residues 292-314 (AAPAAIPSGTTARVAANSAGRTA) the composition is skewed to low complexity. Residues 340–360 (LLWAAGVLGALAIIIAVLLVI) traverse the membrane as a helical segment. Residues 361–431 (KAPGDNSPQQ…ASLARYEIAQ (71 aa)) are Extracellular-facing. The segment at 366–418 (NSPQQAPTPTVTTTGNPPASNTGGTDASPRLNWTERGETRHSGLQSWVVPPTP) is disordered. The segment covering 368–384 (PQQAPTPTVTTTGNPPA) has biased composition (low complexity).

It belongs to the protein kinase superfamily. Ser/Thr protein kinase family. Autophosphorylated.

The protein localises to the cell membrane. It catalyses the reaction L-seryl-[protein] + ATP = O-phospho-L-seryl-[protein] + ADP + H(+). The enzyme catalyses L-threonyl-[protein] + ATP = O-phospho-L-threonyl-[protein] + ADP + H(+). In terms of biological role, protein kinase that regulates many aspects of mycobacterial physiology. Is a key component of a signal transduction pathway that regulates cell growth, cell shape and cell division via phosphorylation of target proteins. In Mycobacterium bovis (strain ATCC BAA-935 / AF2122/97), this protein is Serine/threonine-protein kinase PknA (pknA).